A 275-amino-acid chain; its full sequence is Large ribosomal subunit protein uL2 (275 aa).

Residues 221–275 (VRGVAMNPVDHPMGGGEGKSSGGRHPCSPWGQQSKGVRTRNNKRTDQFIVKRRSK) are disordered.

This sequence belongs to the universal ribosomal protein uL2 family. As to quaternary structure, part of the 50S ribosomal subunit. Forms a bridge to the 30S subunit in the 70S ribosome.

In terms of biological role, one of the primary rRNA binding proteins. Required for association of the 30S and 50S subunits to form the 70S ribosome, for tRNA binding and peptide bond formation. It has been suggested to have peptidyltransferase activity; this is somewhat controversial. Makes several contacts with the 16S rRNA in the 70S ribosome. The polypeptide is Large ribosomal subunit protein uL2 (Desulfosudis oleivorans (strain DSM 6200 / JCM 39069 / Hxd3) (Desulfococcus oleovorans)).